Reading from the N-terminus, the 477-residue chain is MPNSLISRLVSPSLRSQPSKISALRFLTTVSAAERLYGQLQGCTSNLEKELASANVQLDSSCINEVLRRCDPNQFQSGLRFFIWAGTLSSHRHSAYMYTKACDILKIRAKPDLIKYVIESYRKEECFVNVKTMRIVLTLCNQANLADEALWVLRKFPEFNVCADTVAYNLVIRLFADKGDLNIADMLIKEMDCVGLYPDVITYTSMINGYCNAGKIDDAWRLAKEMSKHDCVLNSVTYSRILEGVCKSGDMERALELLAEMEKEDGGGLISPNAVTYTLVIQAFCEKRRVEEALLVLDRMGNRGCMPNRVTACVLIQGVLENDEDVKALSKLIDKLVKLGGVSLSECFSSATVSLIRMKRWEEAEKIFRLMLVRGVRPDGLACSHVFRELCLLERYLDCFLLYQEIEKKDVKSTIDSDIHAVLLLGLCQQGNSWEAAKLAKSMLDKKMRLKVSHVEKIIEALKKTGDEDLMSRFSID.

PPR repeat units lie at residues asparagine 129 to alanine 163, aspartate 164 to proline 198, aspartate 199 to leucine 233, asparagine 234 to glutamate 264, asparagine 273 to proline 307, asparagine 308 to serine 343, leucine 344 to proline 378, aspartate 379 to serine 413, and aspartate 416 to leucine 450.

The protein belongs to the PPR family. P subfamily.

This chain is Pentatricopeptide repeat-containing protein At5g47360, found in Arabidopsis thaliana (Mouse-ear cress).